We begin with the raw amino-acid sequence, 312 residues long: Pantothenate kinase (312 aa).

97 to 104 (GSVAVGKS) provides a ligand contact to ATP.

This sequence belongs to the prokaryotic pantothenate kinase family.

It is found in the cytoplasm. It carries out the reaction (R)-pantothenate + ATP = (R)-4'-phosphopantothenate + ADP + H(+). Its pathway is cofactor biosynthesis; coenzyme A biosynthesis; CoA from (R)-pantothenate: step 1/5. The sequence is that of Pantothenate kinase (coaA) from Mycobacterium leprae (strain TN).